Consider the following 269-residue polypeptide: Interleukin-1 beta (269 aa).

The propeptide occupies 1 to 116 (MAEVPELASE…TRNNDACVHD (116 aa)).

Belongs to the IL-1 family. Monomer. In its precursor form, weakly interacts with full-length MEFV; the mature cytokine does not interact at all. Interacts with integrins ITGAV:ITGBV and ITGA5:ITGB1; integrin-binding is required for IL1B signaling. Interacts with cargo receptor TMED10; the interaction is direct and is required for the secretion of IL1B mature form. Interacts with HSP90AB1; the interaction facilitates cargo translocation into the ERGIC. Interacts with HSP90B1; the interaction facilitates cargo translocation into the ERGIC.

The protein resides in the cytoplasm. Its subcellular location is the cytosol. It is found in the secreted. It localises to the lysosome. The protein localises to the extracellular exosome. Functionally, potent pro-inflammatory cytokine. Initially discovered as the major endogenous pyrogen, induces prostaglandin synthesis, neutrophil influx and activation, T-cell activation and cytokine production, B-cell activation and antibody production, and fibroblast proliferation and collagen production. Promotes Th17 differentiation of T-cells. Synergizes with IL12/interleukin-12 to induce IFNG synthesis from T-helper 1 (Th1) cells. Plays a role in angiogenesis by inducing VEGF production synergistically with TNF and IL6. Involved in transduction of inflammation downstream of pyroptosis: its mature form is specifically released in the extracellular milieu by passing through the gasdermin-D (GSDMD) pore. The protein is Interleukin-1 beta (IL1B) of Macaca mulatta (Rhesus macaque).